The primary structure comprises 314 residues: MAPAETTGNVQRPEAGKQSMGSFWTQMFPPKPTYTEEQVPDLTGKIFIVTGSSSGVGKEAARMLYAKNAKVYMAARPGPKLPAAINSVQEAVPKSGGALIPLELDLADLAVVKKAVEKFTSLETKLHGLINNAAVQALKDTDGDARTAQGHEIHMGVNVLAPFLFTRLLTGVLTATARQEPPGTVRVVWVSSMGTETIGEKRRGLSPDYVDYWPLMSPLERYGLSKAGNWLHGVEFARRYAADGIASFPINPGHLKSDLYREGGALFKFALKPVLYPPTYGAYVELFAALSPTLTLKDSGAWSKYVEMVYFPDC.

A compositionally biased stretch (polar residues) spans 1-10 (MAPAETTGNV). The interval 1-27 (MAPAETTGNVQRPEAGKQSMGSFWTQM) is disordered. Valine 56, lysine 80, aspartate 105, asparagine 132, and arginine 167 together coordinate NADP(+). Catalysis depends on serine 191, which acts as the Proton donor. NADP(+) is bound by residues tyrosine 222 and lysine 226. Tyrosine 222 acts as the Proton acceptor in catalysis. The active-site Lowers pKa of active site Tyr is lysine 226.

The protein belongs to the short-chain dehydrogenases/reductases (SDR) family.

It catalyses the reaction dehydroprobetaenone I + AH2 = probetaenone I + A. The catalysed reaction is betaenone C + AH2 = betaenone B + A. Its pathway is mycotoxin biosynthesis. Its function is as follows. Short-chain dehydrogenase/reductase; part of the gene cluster that mediates the biosynthesis of the phytotoxin stemphyloxin II. The first step of the pathway is the synthesis of dehydroprobetaenone I by the polyketide synthase sthA and the enoyl reductase sthE via condensation of one acetyl-CoA starter unit with 7 malonyl-CoA units and 5 methylations. The C-terminal reductase (R) domain of sthA catalyzes the reductive release of the polyketide chain. Because sthA lacks a designated enoylreductase (ER) domain, the required activity is provided the enoyl reductase sthE. The short-chain dehydrogenase/reductase sthC then catalyzes reduction of dehydroprobetaenone I to probetaenone I. The cytochrome P450 monooxygenase sthF catalyzes successive epoxidation, oxidation (resulting from epoxide opening) and hydroxylation to install a tertiary alcohol in the decaline ring to yield betaenone C from dehydroprobetaenone I and betaenone B from probetaenone I. The FAD-linked oxidoreductase sthB is responsible for the conversion of betaenone C to betaenone A via an intramolecular aldol reaction between C-1 and C-17 to form the bridged tricyclic system in betaenone A. Finally, the cytochrome P450 monooxygenase sthD catalyzes the hydroxylation of C-15 to afford the final metabolite stemphyloxin II. This Phaeosphaeria nodorum (strain SN15 / ATCC MYA-4574 / FGSC 10173) (Glume blotch fungus) protein is Short-chain dehydrogenase/reductase sthC.